The sequence spans 396 residues: Putative N(4)-(beta-N-acetylglucosaminyl)-L-asparaginase GE19290 (396 aa).

Positions Met1–Ala23 are cleaved as a signal peptide. Disulfide bonds link Cys100/Cys105 and Cys199/Cys215. Residue Thr246 is the Nucleophile of the active site. Residues Arg274–Asp277 and Thr297–Gly300 each bind substrate. A disulfide bond links Cys357 and Cys384.

Belongs to the Ntn-hydrolase family. Heterotetramer of two alpha and two beta chains arranged as a dimer of alpha/beta heterodimers. Post-translationally, cleaved into an alpha and beta chain by autocatalysis; this activates the enzyme. The N-terminal residue of the beta subunit is responsible for the nucleophile hydrolase activity.

It carries out the reaction N(4)-(beta-N-acetyl-D-glucosaminyl)-L-asparagine + H2O = N-acetyl-beta-D-glucosaminylamine + L-aspartate + H(+). Cleaves the GlcNAc-Asn bond which joins oligosaccharides to the peptide of asparagine-linked glycoproteins. The protein is Putative N(4)-(beta-N-acetylglucosaminyl)-L-asparaginase GE19290 of Drosophila yakuba (Fruit fly).